Consider the following 195-residue polypeptide: Imidazoleglycerol-phosphate dehydratase (195 aa).

The protein belongs to the imidazoleglycerol-phosphate dehydratase family.

The protein localises to the cytoplasm. The enzyme catalyses D-erythro-1-(imidazol-4-yl)glycerol 3-phosphate = 3-(imidazol-4-yl)-2-oxopropyl phosphate + H2O. The protein operates within amino-acid biosynthesis; L-histidine biosynthesis; L-histidine from 5-phospho-alpha-D-ribose 1-diphosphate: step 6/9. The sequence is that of Imidazoleglycerol-phosphate dehydratase from Pelotomaculum thermopropionicum (strain DSM 13744 / JCM 10971 / SI).